Consider the following 151-residue polypeptide: MPQTIYVLNGPNLNLLGTREPAIYGHATLADVERLCTETAASCGLSAVCRQSNHEGELIDWIHQARDEQAVGIVLNAGGYTHTSVALHDALVGVQIPAVEVHVSNVFARDSFRHHSFIAKAAFASLCGFGIDGYRLAILGLAAKIGTSAKA.

Tyr-24 functions as the Proton acceptor in the catalytic mechanism. Substrate-binding residues include Asn-76, His-82, and Asp-89. The Proton donor role is filled by His-102. Substrate-binding positions include 103–104 (VS) and Arg-113.

Belongs to the type-II 3-dehydroquinase family. In terms of assembly, homododecamer.

It catalyses the reaction 3-dehydroquinate = 3-dehydroshikimate + H2O. Its pathway is metabolic intermediate biosynthesis; chorismate biosynthesis; chorismate from D-erythrose 4-phosphate and phosphoenolpyruvate: step 3/7. Its function is as follows. Catalyzes a trans-dehydration via an enolate intermediate. The chain is 3-dehydroquinate dehydratase from Rhodopseudomonas palustris (strain HaA2).